The chain runs to 170 residues: Ribosome maturation factor RimM (170 aa).

The 74-residue stretch at 97–170 (KPDEYYWVDL…LVVVDWDPEF (74 aa)) folds into the PRC barrel domain.

This sequence belongs to the RimM family. In terms of assembly, binds ribosomal protein uS19.

The protein localises to the cytoplasm. Its function is as follows. An accessory protein needed during the final step in the assembly of 30S ribosomal subunit, possibly for assembly of the head region. Essential for efficient processing of 16S rRNA. May be needed both before and after RbfA during the maturation of 16S rRNA. It has affinity for free ribosomal 30S subunits but not for 70S ribosomes. This Stenotrophomonas maltophilia (strain K279a) protein is Ribosome maturation factor RimM.